Reading from the N-terminus, the 305-residue chain is uncharacterized protein (305 aa).

This is an uncharacterized protein from Acanthamoeba polyphaga mimivirus (APMV).